The primary structure comprises 383 residues: Galactokinase (383 aa).

34–37 contributes to the substrate binding site; it reads EHTD. 124 to 130 is an ATP binding site; the sequence is GAGLSSS. Positions 130 and 162 each coordinate Mg(2+). Catalysis depends on aspartate 174, which acts as the Proton acceptor. Tyrosine 223 is a substrate binding site.

It belongs to the GHMP kinase family. GalK subfamily.

The protein resides in the cytoplasm. The enzyme catalyses alpha-D-galactose + ATP = alpha-D-galactose 1-phosphate + ADP + H(+). It participates in carbohydrate metabolism; galactose metabolism. Its function is as follows. Catalyzes the transfer of the gamma-phosphate of ATP to D-galactose to form alpha-D-galactose-1-phosphate (Gal-1-P). The polypeptide is Galactokinase (Serratia proteamaculans (strain 568)).